The primary structure comprises 362 residues: Mannan endo-1,4-beta-mannosidase (362 aa).

The signal sequence occupies residues 1–26 (MFKKHTISLLIIFLLASAVLAKPIEA). Positions 38 to 349 (QTTKTVMNWL…YHDSWTLNKG (312 aa)) constitute a GH26 domain. Residue H131 participates in substrate binding. E193 acts as the Proton donor in catalysis. Residues W198 and Y268 each coordinate substrate. The active-site Nucleophile is the E292. A substrate-binding site is contributed by 324–325 (WN).

This sequence belongs to the glycosyl hydrolase 26 family. As to quaternary structure, homodimer.

The protein resides in the secreted. The catalysed reaction is Random hydrolysis of (1-&gt;4)-beta-D-mannosidic linkages in mannans, galactomannans and glucomannans.. Functionally, involved in the degradation of glucomannan. Catalyzes the endo hydrolysis of beta-1,4-linked mannan, galactomannan and glucomannan. This Bacillus subtilis (strain 168) protein is Mannan endo-1,4-beta-mannosidase.